Consider the following 191-residue polypeptide: Thymidylate kinase (191 aa).

Residue 7-14 coordinates ATP; the sequence is GVDGAGKS.

The protein belongs to the thymidylate kinase family.

The catalysed reaction is dTMP + ATP = dTDP + ADP. Functionally, phosphorylation of dTMP to form dTDP in both de novo and salvage pathways of dTTP synthesis. In Helicobacter pylori (strain P12), this protein is Thymidylate kinase.